Consider the following 382-residue polypeptide: Chorismate synthase (382 aa).

The NADP(+) site is built by arginine 39 and arginine 45. FMN-binding positions include 128-130 (RAS), 246-247 (QA), alanine 290, 305-309 (KPIAT), and arginine 331.

The protein belongs to the chorismate synthase family. Homotetramer. The cofactor is FMNH2.

The enzyme catalyses 5-O-(1-carboxyvinyl)-3-phosphoshikimate = chorismate + phosphate. It participates in metabolic intermediate biosynthesis; chorismate biosynthesis; chorismate from D-erythrose 4-phosphate and phosphoenolpyruvate: step 7/7. In terms of biological role, catalyzes the anti-1,4-elimination of the C-3 phosphate and the C-6 proR hydrogen from 5-enolpyruvylshikimate-3-phosphate (EPSP) to yield chorismate, which is the branch point compound that serves as the starting substrate for the three terminal pathways of aromatic amino acid biosynthesis. This reaction introduces a second double bond into the aromatic ring system. The protein is Chorismate synthase of Deinococcus geothermalis (strain DSM 11300 / CIP 105573 / AG-3a).